We begin with the raw amino-acid sequence, 166 residues long: MLVIHNRIEPQAEWAAELHLNFEARSKSRLRCFSAENEDVGLFLQRGQSPLRDGEFLQAEDGRIVRVCARPEKLMHVTCSSTFELTRAAYHLGNRHVALQVGDGWLRLLDDYVLKAMLDQLGATTEAIEAPFQPEHGAYGGGHHHSRAGEEDFNYPPRMHQFGVRK.

The interval 133–156 (QPEHGAYGGGHHHSRAGEEDFNYP) is disordered.

Belongs to the UreE family.

It localises to the cytoplasm. In terms of biological role, involved in urease metallocenter assembly. Binds nickel. Probably functions as a nickel donor during metallocenter assembly. This is Urease accessory protein UreE 2 from Pseudomonas syringae pv. tomato (strain ATCC BAA-871 / DC3000).